A 492-amino-acid chain; its full sequence is N-succinylglutamate 5-semialdehyde dehydrogenase (492 aa).

220-225 serves as a coordination point for NAD(+); that stretch reads GSANTG. Active-site residues include Glu243 and Cys277.

It belongs to the aldehyde dehydrogenase family. AstD subfamily.

It carries out the reaction N-succinyl-L-glutamate 5-semialdehyde + NAD(+) + H2O = N-succinyl-L-glutamate + NADH + 2 H(+). It functions in the pathway amino-acid degradation; L-arginine degradation via AST pathway; L-glutamate and succinate from L-arginine: step 4/5. In terms of biological role, catalyzes the NAD-dependent reduction of succinylglutamate semialdehyde into succinylglutamate. This chain is N-succinylglutamate 5-semialdehyde dehydrogenase, found in Escherichia coli (strain ATCC 8739 / DSM 1576 / NBRC 3972 / NCIMB 8545 / WDCM 00012 / Crooks).